Reading from the N-terminus, the 292-residue chain is NAD kinase (292 aa).

Asp-73 acts as the Proton acceptor in catalysis. NAD(+) contacts are provided by residues 73–74 (DG), 147–148 (NE), His-158, Arg-175, Asp-177, 188–193 (TAYSLS), and Gln-247.

This sequence belongs to the NAD kinase family. The cofactor is a divalent metal cation.

The protein localises to the cytoplasm. The catalysed reaction is NAD(+) + ATP = ADP + NADP(+) + H(+). Functionally, involved in the regulation of the intracellular balance of NAD and NADP, and is a key enzyme in the biosynthesis of NADP. Catalyzes specifically the phosphorylation on 2'-hydroxyl of the adenosine moiety of NAD to yield NADP. The sequence is that of NAD kinase from Pectobacterium atrosepticum (strain SCRI 1043 / ATCC BAA-672) (Erwinia carotovora subsp. atroseptica).